The chain runs to 338 residues: Anthranilate phosphoribosyltransferase (338 aa).

Residues Gly81, 84-85, Thr89, 91-94, 109-117, and Ala121 each bind 5-phospho-alpha-D-ribose 1-diphosphate; these read GD, NVST, and KHGNRALSS. Gly81 lines the anthranilate pocket. Ser93 contributes to the Mg(2+) binding site. Position 112 (Asn112) interacts with anthranilate. Residue Arg167 participates in anthranilate binding. Mg(2+)-binding residues include Asp225 and Glu226.

The protein belongs to the anthranilate phosphoribosyltransferase family. In terms of assembly, homodimer. It depends on Mg(2+) as a cofactor.

The catalysed reaction is N-(5-phospho-beta-D-ribosyl)anthranilate + diphosphate = 5-phospho-alpha-D-ribose 1-diphosphate + anthranilate. It participates in amino-acid biosynthesis; L-tryptophan biosynthesis; L-tryptophan from chorismate: step 2/5. Its function is as follows. Catalyzes the transfer of the phosphoribosyl group of 5-phosphorylribose-1-pyrophosphate (PRPP) to anthranilate to yield N-(5'-phosphoribosyl)-anthranilate (PRA). This chain is Anthranilate phosphoribosyltransferase, found in Chelativorans sp. (strain BNC1).